The sequence spans 87 residues: Cell division topological specificity factor (87 aa).

This sequence belongs to the MinE family.

Functionally, prevents the cell division inhibition by proteins MinC and MinD at internal division sites while permitting inhibition at polar sites. This ensures cell division at the proper site by restricting the formation of a division septum at the midpoint of the long axis of the cell. The sequence is that of Cell division topological specificity factor from Vibrio vulnificus (strain CMCP6).